A 258-amino-acid polypeptide reads, in one-letter code: Trans-aconitate 2-methyltransferase (258 aa).

The protein belongs to the methyltransferase superfamily. Tam family.

Its subcellular location is the cytoplasm. The catalysed reaction is trans-aconitate + S-adenosyl-L-methionine = (E)-3-(methoxycarbonyl)pent-2-enedioate + S-adenosyl-L-homocysteine. Catalyzes the S-adenosylmethionine monomethyl esterification of trans-aconitate. The chain is Trans-aconitate 2-methyltransferase from Methylobacterium nodulans (strain LMG 21967 / CNCM I-2342 / ORS 2060).